The primary structure comprises 602 residues: Pyranose dehydrogenase 1 (602 aa).

An N-terminal signal peptide occupies residues 1-25; it reads MLPRVTKLNSRLLSLALLGIQIARG. N100 carries N-linked (GlcNAc...) asparagine glycosylation. A Tele-8alpha-FAD histidine modification is found at H128. N-linked (GlcNAc...) asparagine glycans are attached at residues N200, N277, and N344. The active-site Proton acceptor is H537. H581 is a catalytic residue.

It belongs to the GMC oxidoreductase family. As to quaternary structure, monomer. FAD serves as cofactor. N-glycosylated.

Its subcellular location is the secreted. It catalyses the reaction pyranose + acceptor = pyranos-2-ulose + reduced acceptor.. The catalysed reaction is pyranose + acceptor = pyranos-3-ulose + reduced acceptor.. The enzyme catalyses pyranose + acceptor = pyranos-2,3-diulose + reduced acceptor.. It carries out the reaction a pyranoside + acceptor = a pyranosid-3-ulose + reduced acceptor.. It catalyses the reaction a pyranoside + acceptor = a pyranosid-3,4-diulose + reduced acceptor.. Catalyzes the single-oxidation or sequential double oxidation reaction of carbohydrates primarily at carbon-2 and/or carbon-3 with the concomitant reduction of the flavin. The enzyme exhibits a broad sugar substrate specificity, oxidizing different aldopyranoses to the corresponding C-1, C-2, C-3 or C-1,2, C-2,3 and C-3,4 (di)dehydro sugars with substrate-specific regioselectivity. Accepts only a narrow range of electron acceptors such as substituted benzoquinones and complexed metal ions and reacts extremely slowly with O(2) as acceptor. May play a role in the natural recycling of plant matter by oxidizing all major monosaccharides in lignocellulose and by reducing quinone compounds or reactive radical species generated during lignin depolymerization. The protein is Pyranose dehydrogenase 1 of Leucoagaricus meleagris (Western flat-topped agaric).